The chain runs to 375 residues: MHFPLVSAWNKRRRSKSYDTDPCTFLFSIIFARWHKRVYRTAECWQIEDQASQPRKRRFGSSVYTLKEMEEATSSFSDENLLGKGGFGRVYQGTLKTGEVVAIKKMDLPTFKKADGEREFRVEVDILSRLDHPNLVSLIGYCADGKHRFLVYEYMQNGNLQDHLNGIKEAKISWPIRLRIALGAAKGLAYLHSSSSVGIPIVHRDFKSTNVLLDSNYNAKISDFGLAKLMPEGKDTCVTARVLGTFGYFDPEYTSTGKLTLQSDIYAFGVVLLELLTGRRAVDLTQGPNEQNLVLQVRNILNDRKKLRKVIDVELPRNSYSMEAITMFADLASRCIRIESKERPSVMDCVKELQLIIYTNSKGGLGGTIPTFRRL.

Thr65 carries the post-translational modification Phosphothreonine. Positions Phe76 to Ile356 constitute a Protein kinase domain. Residues Leu82–Val90 and Lys104 contribute to the ATP site. The residue at position 152 (Tyr152) is a Phosphotyrosine. The Proton acceptor role is filled by Asp205. Position 245 is a phosphothreonine (Thr245). At Tyr253 the chain carries Phosphotyrosine.

This sequence belongs to the protein kinase superfamily. Ser/Thr protein kinase family.

It is found in the cell membrane. It catalyses the reaction L-seryl-[protein] + ATP = O-phospho-L-seryl-[protein] + ADP + H(+). The enzyme catalyses L-threonyl-[protein] + ATP = O-phospho-L-threonyl-[protein] + ADP + H(+). Functionally, may be involved in plant defense signaling. This chain is Probable serine/threonine-protein kinase PBL28, found in Arabidopsis thaliana (Mouse-ear cress).